The following is a 453-amino-acid chain: tRNA-2-methylthio-N(6)-dimethylallyladenosine synthase (453 aa).

Residues 4-118 (KKFYIENYGC…IPNLINNFFK (115 aa)) enclose the MTTase N-terminal domain. Residues cysteine 13, cysteine 49, cysteine 83, cysteine 156, cysteine 160, and cysteine 163 each contribute to the [4Fe-4S] cluster site. The Radical SAM core domain occupies 142–388 (EEKKITAFVT…NLQKTHSYYR (247 aa)). The TRAM domain maps to 390–453 (RKYIGSIQDI…SATLVGDIYV (64 aa)).

This sequence belongs to the methylthiotransferase family. MiaB subfamily. As to quaternary structure, monomer. [4Fe-4S] cluster serves as cofactor.

The protein resides in the cytoplasm. The catalysed reaction is N(6)-dimethylallyladenosine(37) in tRNA + (sulfur carrier)-SH + AH2 + 2 S-adenosyl-L-methionine = 2-methylsulfanyl-N(6)-dimethylallyladenosine(37) in tRNA + (sulfur carrier)-H + 5'-deoxyadenosine + L-methionine + A + S-adenosyl-L-homocysteine + 2 H(+). In terms of biological role, catalyzes the methylthiolation of N6-(dimethylallyl)adenosine (i(6)A), leading to the formation of 2-methylthio-N6-(dimethylallyl)adenosine (ms(2)i(6)A) at position 37 in tRNAs that read codons beginning with uridine. The chain is tRNA-2-methylthio-N(6)-dimethylallyladenosine synthase from Karelsulcia muelleri (strain GWSS) (Sulcia muelleri).